The following is a 153-amino-acid chain: ORM1-like protein 2 (153 aa).

Over Met-1–Gly-21 the chain is Cytoplasmic. 2 consecutive transmembrane segments (helical) span residues Ile-22–Phe-42 and Phe-43–Phe-63. The Cytoplasmic portion of the chain corresponds to Leu-64 to Ser-105. A helical transmembrane segment spans residues Pro-106–Ile-126. Residues Asn-127–Tyr-153 are Extracellular-facing.

This sequence belongs to the ORM family. Ceramide-sensitive subunit of the serine palmitoyltransferase (SPT) complex, which is also composed of SPTLC1, SPTLC2/3 and SPTSSA/B.

The protein localises to the endoplasmic reticulum membrane. Its function is as follows. Plays an essential role in the homeostatic regulation of sphingolipid de novo biosynthesis by modulating the activity of the serine palmitoyltransferase (SPT) in response to ceramide levels. When complexed to SPT, the binding of ceramides to its N-terminus stabilizes a conformation that block SPT substrate entry, hence preventing SPT catalytic activity. Through this mechanism, maintains ceramide levels at sufficient concentrations for the production of complex sphingolipids, but which prevents the accumulation of ceramides to levels that trigger apoptosis. The protein is ORM1-like protein 2 (ORMDL2) of Bos taurus (Bovine).